The following is an 873-amino-acid chain: Leucine--tRNA ligase (873 aa).

The 'HIGH' region signature appears at 43-53; it reads PYPSGSLHMGH. The short motif at 624 to 628 is the 'KMSKS' region element; it reads TMSKS. Residue lysine 627 participates in ATP binding.

The protein belongs to the class-I aminoacyl-tRNA synthetase family.

Its subcellular location is the cytoplasm. The catalysed reaction is tRNA(Leu) + L-leucine + ATP = L-leucyl-tRNA(Leu) + AMP + diphosphate. This Synechococcus sp. (strain JA-3-3Ab) (Cyanobacteria bacterium Yellowstone A-Prime) protein is Leucine--tRNA ligase.